The primary structure comprises 192 residues: MFKFDNLILASSSKQRLCLLNQLGVLPGEIVIPNIDESPLKKELPKIYSMRVAKEKVIKVSLLYPKRFILGADTVVCCGRKILPKAETEDQAFEILELISGRRHRVYTSVYLYVPGKKLHYRNVMTVVKIKRLSVKEINSYILSGEWKGKAGACNIQGNAGKFVISMNGSYSSVIGLPLYETYSILSQYFPI.

Aspartate 73 acts as the Proton acceptor in catalysis.

The protein belongs to the Maf family. A divalent metal cation serves as cofactor.

The protein localises to the cytoplasm. It carries out the reaction a ribonucleoside 5'-triphosphate + H2O = a ribonucleoside 5'-phosphate + diphosphate + H(+). The enzyme catalyses a 2'-deoxyribonucleoside 5'-triphosphate + H2O = a 2'-deoxyribonucleoside 5'-phosphate + diphosphate + H(+). Its function is as follows. Nucleoside triphosphate pyrophosphatase. May have a dual role in cell division arrest and in preventing the incorporation of modified nucleotides into cellular nucleic acids. The polypeptide is Nucleoside triphosphate pyrophosphatase (Ehrlichia ruminantium (strain Gardel)).